The sequence spans 63 residues: Large ribosomal subunit protein bL32 (63 aa).

Residues 1-18 (MPVPKRKTSPSRRGKRRS) are compositionally biased toward basic residues. The disordered stretch occupies residues 1–26 (MPVPKRKTSPSRRGKRRSHDGLRPEN).

The protein belongs to the bacterial ribosomal protein bL32 family.

This Neorickettsia sennetsu (strain ATCC VR-367 / Miyayama) (Ehrlichia sennetsu) protein is Large ribosomal subunit protein bL32.